The following is a 151-amino-acid chain: Deoxyuridine 5'-triphosphate nucleotidohydrolase (151 aa).

Substrate contacts are provided by residues 70–72 (RSG), N83, 87–89 (LID), and M97.

The protein belongs to the dUTPase family. Homotrimer. It depends on Mg(2+) as a cofactor.

It carries out the reaction dUTP + H2O = dUMP + diphosphate + H(+). It functions in the pathway pyrimidine metabolism; dUMP biosynthesis; dUMP from dCTP (dUTP route): step 2/2. Functionally, this enzyme is involved in nucleotide metabolism: it produces dUMP, the immediate precursor of thymidine nucleotides and it decreases the intracellular concentration of dUTP so that uracil cannot be incorporated into DNA. This chain is Deoxyuridine 5'-triphosphate nucleotidohydrolase, found in Escherichia coli O7:K1 (strain IAI39 / ExPEC).